Consider the following 3071-residue polypeptide: Intermembrane lipid transfer protein vps1301 (3071 aa).

The 114-residue stretch at 2 to 115 folds into the Chorein N-terminal domain; sequence LEGLVAGLLN…QQALKQEQLD (114 aa). In terms of domain architecture, SHR-BD spans 2143–2415; it reads HIEIFSPYII…KYSWDYPCCA (273 aa).

Belongs to the VPS13 family.

The protein localises to the golgi apparatus. It is found in the trans-Golgi network. Its function is as follows. Mediates the transfer of lipids between membranes at organelle contact sites. May play a role in mitochondrial lipid homeostasis, Golgi vesicle transport, reticulophagy, actin cytoskeleton organization and formation of the forespore membrane. In Schizosaccharomyces pombe (strain 972 / ATCC 24843) (Fission yeast), this protein is Intermembrane lipid transfer protein vps1301.